A 1680-amino-acid polypeptide reads, in one-letter code: MGLWGILCLLIFLDKTWGQEQTYVISAPKILRVGSSENVVIQVHGYTEAFDATLSLKSYPDKKVTFSSGYVNLSPENKFQNAALLTLQPNQVPREESPVSHVYLEVVSKHFSKSKKIPITYNNGILFIHTDKPVYTPDQSVKIRVYSLGDDLKPAKRETVLTFIDPEGSEVDIVEENDYTGIISFPDFKIPSNPKYGVWTIKANYKKDFTTTGTAYFEIKEYVLPRFSVSIELERTFIGYKNFKNFEITVKARYFYNKVVPDAEVYAFFGLREDIKDEEKQMMHKATQAAKLVDGVAQISFDSETAVKELSYNSLEDLNNKYLYIAVTVTESSGGFSEEAEIPGVKYVLSPYTLNLVATPLFVKPGIPFSIKAQVKDSLEQAVGGVPVTLMAQTVDVNQETSDLETKRSITHDTDGVAVFVLNLPSNVTVLKFEIRTDDPELPEENQASKEYEAVAYSSLSQSYIYIAWTENYKPMLVGEYLNIMVTPKSPYIDKITHYNYLILSKGKIVQYGTREKLFSSTYQNINIPVTQNMVPSARLLVYYIVTGEQTAELVADAVWINIEEKCGNQLQVHLSPDEYVYSPGQTVSLDMVTEADSWVALSAVDRAVYKVQGNAKRAMQRVFQALDEKSDLGCGAGGGHDNADVFHLAGLTFLTNANADDSHYRDDSCKEILRSKRNLHLLRQKIEEQAAKYKHSVPKKCCYDGARVNFYETCEERVARVTIGPLCIRAFNECCTIANKIRKESPHKPVQLGRIHIKTLLPVMKADIRSYFPESWLWEIHRVPKRKQLQVTLPDSLTTWEIQGIGISDNGICVADTLKAKVFKEVFLEMNIPYSVVRGEQIQLKGTVYNYMTSGTKFCVKMSAVEGICTSGSSAASLHTSRPSRCVFQRIEGSSSHLVTFTLLPLEIGLHSINFSLETSFGKDILVKTLRVVPEGVKRESYAGVILDPKGIRGIVNRRKEFPYRIPLDLVPKTKVERILSVKGLLVGEFLSTVLSKEGINILTHLPKGSAEAELMSIAPVFYVFHYLEAGNHWNIFYPDTLSKRQSLEKKIKQGVVSVMSYRNADYSYSMWKGASASTWLTAFALRVLGQVAKYVKQDENSICNSLLWLVEKCQLENGSFKENSQYLPIKLQGTLPAEAQEKTLYLTAFSVIGIRKAVDICPTMKIHTALDKADSFLLENTLPSKSTFTLAIVAYALSLGDRTHPRFRLIVSALRKEAFVKGDPPIYRYWRDTLKRPDSSVPSSGTAGMVETTAYALLASLKLKDMNYANPIIKWLSEEQRYGGGFYSTQDTINAIEGLTEYSLLLKQIHLDMDINVAYKHEGDFHKYKVTEKHFLGRPVEVSLNDDLVVSTGYSSGLATVYVKTVVHKISVSEEFCSFYLKIDTQDIEASSHFRLSDSGFKRIIACASYKPSKEESTSGSSHAVMDISLPTGIGANEEDLRALVEGVDQLLTDYQIKDGHVILQLNSIPSRDFLCVRFRIFELFQVGFLNPATFTVYEYHRPDKQCTMIYSISDTRLQKVCEGAACTCVEADCAQLQAEVDLAISADSRKEKACKPETAYAYKVRITSATEENVFVKYTATLLVTYKTGEAADENSEVTFIKKMSCTNANLVKGKQYLIMGKEVLQIKHNFSFKYIYPLDSSTWIEYWPTDTTCPSCQAFVENLNNFAEDLFLNSCE.

Positions 1–18 are cleaved as a signal peptide; the sequence is MGLWGILCLLIFLDKTWG. N427 carries N-linked (GlcNAc...) asparagine glycosylation. 14 cysteine pairs are disulfide-bonded: C567–C814, C635–C670, C702–C728, C703–C735, C715–C736, C860–C887, C870–C1531, C1105–C1163, C1379–C1509, C1409–C1478, C1524–C1529, C1536–C1609, C1557–C1679, and C1657–C1660. The propeptide occupies 675-678; sequence RSKR. The interval 696 to 725 is involved in C5AR1 binding; sequence HSVPKKCCYDGARVNFYETCEERVARVTIG. In terms of domain architecture, Anaphylatoxin-like spans 702-736; it reads CCYDGARVNFYETCEERVARVTIGPLCIRAFNECC. N-linked (GlcNAc...) asparagine glycosylation is found at N915 and N1119. Residues 1536-1679 enclose the NTR domain; it reads CAQLQAEVDL…FAEDLFLNSC (144 aa). N-linked (GlcNAc...) asparagine glycosylation is present at N1633.

In absence of complement activation, the C5 precursor is first processed by the removal of 4 basic residues, forming two chains, beta and alpha, linked by a disulfide bond. As to quaternary structure, complement C5b is composed of complement C5b and complement C5 beta chains that are associated via disulfide bonds. Component of the membrane attack complex (MAC), composed of complement C5b, C6, C7, C8A, C8B, C8G and multiple copies of the pore-forming subunit C9. Interacts with the tick complement inhibitors OmCI, RaCI1 and CirpT1. Interacts with cobra venom factor (CVF). Post-translationally, C5 precursor is first processed by the removal of 4 basic residues, forming two chains, beta and alpha, linked by a disulfide bond. During activation of the complement systems, the alpha chain is cleaved into C5a and C5b by the C5 convertase: C5b stays linked to the beta chain, while C5a is released in the plasma. The alpha chain is cleaved by the serine protease complement C2b component of the C5 convertase to generate C5a and C5b following activation by the classical, lectin and GZMK complement systems. The alpha chain is cleaved by CFB component of the C5 convertase to generate C5a and C5b following activation by the alternative complement system.

The protein resides in the secreted. The protein localises to the target cell membrane. Its activity is regulated as follows. Membrane attack complex (MAC) assembly is inhibited by CD59, thereby protecting self-cells from damage during complement activation. MAC assembly is also inhibited by clusterin (CLU) chaperones that inhibit polymerization of C9. In terms of biological role, precursor of the C5a anaphylatoxin and complement C5b components of the complement pathways, which consist in a cascade of proteins that leads to phagocytosis and breakdown of pathogens and signaling that strengthens the adaptive immune system. Activated downstream of classical, alternative, lectin and GZMK complement pathways. Its function is as follows. Component of the membrane attack complex (MAC), a multiprotein complex activated by the complement cascade, which inserts into a target cell membrane and forms a pore, leading to target cell membrane rupture and cell lysis. Complement C5b is generated following cleavage by C5 convertase and initiates formation of the MAC complex: C5b binds sequentially C6, C7, C8 and multiple copies of the pore-forming subunit C9. During MAC complex assembly, the C5b6 subcomplex, composed of complement C5b and C6, associates with the outer leaflet of target cell membrane, reducing the energy for membrane bending. Mediator of local inflammatory process released following cleavage by C5 convertase. Acts by binding to its receptor (C5AR1 or C5AR2), activating G protein-coupled receptor signaling and inducing a variety of responses including intracellular calcium release, contraction of smooth muscle, increased vascular permeability, and histamine release from mast cells and basophilic leukocytes. C5a is also a potent chemokine which stimulates the locomotion of polymorphonuclear leukocytes and directs their migration toward sites of inflammation. The chain is Complement C5 (C5) from Mus musculus (Mouse).